The primary structure comprises 141 residues: Hemoglobin subunit alpha (141 aa).

Residues 1–141 form the Globin domain; it reads VLSPADKTNI…VSTVLVSKYR (141 aa). A Phosphoserine modification is found at serine 3. N6-succinyllysine is present on lysine 7. Phosphothreonine is present on threonine 8. Lysine 11 carries the post-translational modification N6-succinyllysine. An N6-acetyllysine; alternate modification is found at lysine 16. Lysine 16 bears the N6-succinyllysine; alternate mark. Residue tyrosine 24 is modified to Phosphotyrosine. A Phosphoserine modification is found at serine 35. Lysine 40 carries the N6-succinyllysine modification. Serine 49 bears the Phosphoserine mark. Histidine 58 is an O2 binding site. Histidine 87 is a binding site for heme b. Serine 102 bears the Phosphoserine mark. Residue threonine 108 is modified to Phosphothreonine. Serine 124 and serine 131 each carry phosphoserine. The residue at position 134 (threonine 134) is a Phosphothreonine. Serine 138 bears the Phosphoserine mark.

This sequence belongs to the globin family. In terms of assembly, heterotetramer of two alpha chains and two beta chains. Red blood cells.

Functionally, involved in oxygen transport from the lung to the various peripheral tissues. Hemopressin acts as an antagonist peptide of the cannabinoid receptor CNR1. Hemopressin-binding efficiently blocks cannabinoid receptor CNR1 and subsequent signaling. This Myotis velifer (Mouse-eared bat) protein is Hemoglobin subunit alpha (HBA).